The chain runs to 202 residues: MFPKPLVILAHEIYGVNSHMKKMGRLIKMAGYDVLTPNLLGEDEVYTLKEEKTAYEQFTKHERLKTGETIIQNVIRQNAGRHIFVIGFSVGATIAWKCSSMPEVSGSVCYYGSRIRDSLHHMPACPVLLFFPNYEPSFDVALLIKKLREKQHTHLEIYQFDALHGFANPDSVYFNRALFFKTLSIIKNGAESRLRTVSSSFF.

It belongs to the dienelactone hydrolase family.

This is an uncharacterized protein from Bacillus subtilis (strain 168).